We begin with the raw amino-acid sequence, 256 residues long: 5-keto-4-deoxy-D-glucarate aldolase (256 aa).

The active-site Proton acceptor is the His50. Substrate is bound at residue Gln151. Residue Glu153 participates in Mg(2+) binding. Substrate-binding residues include Ser178 and Asp179. Asp179 is a binding site for Mg(2+).

It belongs to the HpcH/HpaI aldolase family. KDGluc aldolase subfamily. As to quaternary structure, homohexamer; trimer of dimers. It depends on Mg(2+) as a cofactor.

It carries out the reaction 5-dehydro-4-deoxy-D-glucarate = 2-hydroxy-3-oxopropanoate + pyruvate. The enzyme catalyses 2-dehydro-3-deoxy-D-glucarate = 2-hydroxy-3-oxopropanoate + pyruvate. Its pathway is carbohydrate acid metabolism; galactarate degradation; D-glycerate from galactarate: step 2/3. Functionally, catalyzes the reversible retro-aldol cleavage of both 5-keto-4-deoxy-D-glucarate and 2-keto-3-deoxy-D-glucarate to pyruvate and tartronic semialdehyde. This Salmonella paratyphi C (strain RKS4594) protein is 5-keto-4-deoxy-D-glucarate aldolase.